The chain runs to 132 residues: Small ribosomal subunit protein uS8 (132 aa).

It belongs to the universal ribosomal protein uS8 family. Part of the 30S ribosomal subunit. Contacts proteins S5 and S12.

One of the primary rRNA binding proteins, it binds directly to 16S rRNA central domain where it helps coordinate assembly of the platform of the 30S subunit. This is Small ribosomal subunit protein uS8 from Afipia carboxidovorans (strain ATCC 49405 / DSM 1227 / KCTC 32145 / OM5) (Oligotropha carboxidovorans).